The chain runs to 111 residues: uncharacterized protein (111 aa).

The helical transmembrane segment at 48-70 (LFLVPFPASFTRWLTFLFHLVIY) threads the bilayer.

The protein localises to the membrane. This is an uncharacterized protein from Saccharomyces cerevisiae (strain ATCC 204508 / S288c) (Baker's yeast).